We begin with the raw amino-acid sequence, 419 residues long: Gamma-glutamyl phosphate reductase (419 aa).

Belongs to the gamma-glutamyl phosphate reductase family.

The protein localises to the cytoplasm. It carries out the reaction L-glutamate 5-semialdehyde + phosphate + NADP(+) = L-glutamyl 5-phosphate + NADPH + H(+). It functions in the pathway amino-acid biosynthesis; L-proline biosynthesis; L-glutamate 5-semialdehyde from L-glutamate: step 2/2. In terms of biological role, catalyzes the NADPH-dependent reduction of L-glutamate 5-phosphate into L-glutamate 5-semialdehyde and phosphate. The product spontaneously undergoes cyclization to form 1-pyrroline-5-carboxylate. The chain is Gamma-glutamyl phosphate reductase from Caldicellulosiruptor bescii (strain ATCC BAA-1888 / DSM 6725 / KCTC 15123 / Z-1320) (Anaerocellum thermophilum).